Here is a 345-residue protein sequence, read N- to C-terminus: MRLSDFDFALPEGLVAQAPVTPRDASRLMVLAPGEGAPAHRGFADLPELLAPGDLLVFNDTRVIPARLLGHKASGGKVELLLCEPLEGGLGRRWRAMGQASKPIREGAVLTFDGLEARVDGVEGEGFYRVTLDRQGPELEAALGRAGRIPLPPYIRRAPDAEDAARYQTIWARAPGSAAAPTAGLHFTEPLLARLAARGIRRTAVTLHVGPGTFLPIRGDDLDLHRMHGERYEVSPAAAEELAATRARGGRIVAVGTTSVRTLESAWRDGAVAAGPGRTELFIRPGHPFHAVDAMVTNFHLPRSTLLVLVCAFGGQGRVLAAYREAVARGYRFFSYGDAMLVLRR.

The protein belongs to the QueA family. As to quaternary structure, monomer.

It is found in the cytoplasm. It carries out the reaction 7-aminomethyl-7-carbaguanosine(34) in tRNA + S-adenosyl-L-methionine = epoxyqueuosine(34) in tRNA + adenine + L-methionine + 2 H(+). It functions in the pathway tRNA modification; tRNA-queuosine biosynthesis. Its function is as follows. Transfers and isomerizes the ribose moiety from AdoMet to the 7-aminomethyl group of 7-deazaguanine (preQ1-tRNA) to give epoxyqueuosine (oQ-tRNA). The chain is S-adenosylmethionine:tRNA ribosyltransferase-isomerase from Anaeromyxobacter sp. (strain K).